The primary structure comprises 430 residues: Putative cytochrome P450 139 (430 aa).

Cysteine 372 contacts heme.

The protein belongs to the cytochrome P450 family. Heme serves as cofactor.

The chain is Putative cytochrome P450 139 (cyp139) from Mycobacterium bovis (strain ATCC BAA-935 / AF2122/97).